A 363-amino-acid polypeptide reads, in one-letter code: Peptide-N(4)-(N-acetyl-beta-glucosaminyl)asparagine amidase (363 aa).

C129, C132, C165, and C168 together coordinate Zn(2+). C191 serves as the catalytic Nucleophile. Catalysis depends on residues H218 and D235. E238 contacts substrate. Residues 325-363 (RGKTQETKSESVSAASKSSNRGRESGSADWKAQRGEDGK) are disordered. Over residues 334–343 (ESVSAASKSS) the composition is skewed to low complexity. Residues 345-363 (RGRESGSADWKAQRGEDGK) show a composition bias toward basic and acidic residues.

It belongs to the transglutaminase-like superfamily. PNGase family. Interacts with RAD23 subunit of 26S proteasome. Zn(2+) serves as cofactor.

The protein localises to the cytoplasm. The protein resides in the nucleus. The enzyme catalyses Hydrolysis of an N(4)-(acetyl-beta-D-glucosaminyl)asparagine residue in which the glucosamine residue may be further glycosylated, to yield a (substituted) N-acetyl-beta-D-glucosaminylamine and a peptide containing an aspartate residue.. Inhibited by Z-VAD-fmk, a well-known caspase inhibitor. Also inhibited by Man9GlcNAc2-iodoacetoamide. Both molecules inhibit enzyme activity through covalent binding of the carbohydrate to the single Cys-191 residue. In terms of biological role, specifically deglycosylates the denatured form of N-linked glycoproteins in the cytoplasm and assists their proteasome-mediated degradation. Cleaves the beta-aspartyl-glucosamine (GlcNAc) of the glycan and the amide side chain of Asn, converting Asn to Asp. Prefers proteins containing high-mannose over those bearing complex type oligosaccharides. Can recognize misfolded proteins in the endoplasmic reticulum that are exported to the cytosol to be destroyed and deglycosylate them, while it has no activity toward native proteins. Deglycosylation is a prerequisite for subsequent proteasome-mediated degradation of some, but not all, misfolded glycoproteins. Involved in the formation of free oligosaccharide in cytosol. The protein is Peptide-N(4)-(N-acetyl-beta-glucosaminyl)asparagine amidase (PNG1) of Saccharomyces cerevisiae (strain ATCC 204508 / S288c) (Baker's yeast).